A 204-amino-acid polypeptide reads, in one-letter code: Guanylate kinase (204 aa).

Residues 3–181 (GTLIIITAPS…ALDDLVAVVR (179 aa)) enclose the Guanylate kinase-like domain. Residue 10-17 (APSGAGKT) participates in ATP binding.

The protein belongs to the guanylate kinase family.

It localises to the cytoplasm. It carries out the reaction GMP + ATP = GDP + ADP. Its function is as follows. Essential for recycling GMP and indirectly, cGMP. The chain is Guanylate kinase from Aromatoleum aromaticum (strain DSM 19018 / LMG 30748 / EbN1) (Azoarcus sp. (strain EbN1)).